We begin with the raw amino-acid sequence, 779 residues long: Acyl-homoserine lactone acylase PvdQ (779 aa).

The signal sequence occupies residues 1-25; that stretch reads MIISRPLCGFVFAGLSFAVILPAQA. The propeptide at 202 to 223 is spacer peptide; the sequence is SQQVQALQLAAVRNQRFALERG. The Nucleophile role is filled by serine 224. Positions 731 to 746 are enriched in polar residues; that stretch reads ESSNPQSAHSSDQTEA. Positions 731–752 are disordered; sequence ESSNPQSAHSSDQTEAFSKKQW.

The protein belongs to the peptidase S45 family. In terms of assembly, heterodimer of an alpha subunit and a beta subunit processed from the same precursor.

The protein resides in the periplasm. The enzyme catalyses an N-acyl-L-homoserine lactone + H2O = L-homoserine lactone + a carboxylate. In terms of biological role, catalyzes the deacylation of acyl-homoserine lactone (AHL or acyl-HSL), releasing homoserine lactone (HSL) and the corresponding fatty acid. Possesses a specificity for the degradation of long-chain acyl-HSLs (side chains of 11 to 14 carbons in length). This chain is Acyl-homoserine lactone acylase PvdQ (pvdQ), found in Pseudomonas savastanoi pv. phaseolicola (strain 1448A / Race 6) (Pseudomonas syringae pv. phaseolicola (strain 1448A / Race 6)).